We begin with the raw amino-acid sequence, 151 residues long: Nucleoside diphosphate kinase (151 aa).

ATP contacts are provided by K11, F59, R87, T93, R104, and N114. The Pros-phosphohistidine intermediate role is filled by H117.

It belongs to the NDK family. As to quaternary structure, homohexamer. The cofactor is Mg(2+).

It catalyses the reaction a 2'-deoxyribonucleoside 5'-diphosphate + ATP = a 2'-deoxyribonucleoside 5'-triphosphate + ADP. The catalysed reaction is a ribonucleoside 5'-diphosphate + ATP = a ribonucleoside 5'-triphosphate + ADP. Major role in the synthesis of nucleoside triphosphates other than ATP. The ATP gamma phosphate is transferred to the NDP beta phosphate via a ping-pong mechanism, using a phosphorylated active-site intermediate. In Ginglymostoma cirratum (Nurse shark), this protein is Nucleoside diphosphate kinase.